Here is a 476-residue protein sequence, read N- to C-terminus: Glycogen synthase (476 aa).

Residue K15 coordinates ADP-alpha-D-glucose.

The protein belongs to the glycosyltransferase 1 family. Bacterial/plant glycogen synthase subfamily.

It catalyses the reaction [(1-&gt;4)-alpha-D-glucosyl](n) + ADP-alpha-D-glucose = [(1-&gt;4)-alpha-D-glucosyl](n+1) + ADP + H(+). It functions in the pathway glycan biosynthesis; glycogen biosynthesis. In terms of biological role, synthesizes alpha-1,4-glucan chains using ADP-glucose. In Bacillus anthracis, this protein is Glycogen synthase.